Reading from the N-terminus, the 740-residue chain is MSSAVRIVEKQLDEILAIARNPAQIRNAGTLAHVDHGKTTTTDSLLMGAGLLSPKVAGKALAMDFVAIEQLRQMTVKAANISLYFEYGGKPYLVNFVDTPGHVDFTGHVTRSLRVMDGGLVVVDSVEGVMTQTETVVRQALEEYVRPVLFINKIDRLIKELRLSPQEIQQRILTIVKDFNALIDMFAPPEFKDKWKVDPAKGQVALGSALHKWGITIPMAQKAGLKFSNIVDAYEKGYVDKLGEEFPLYKTLLTMIIEHVPPPNVAQKYRIPRLWRGDLNSEVGKAMLEADPNGPTVIAVSKVNKDPHAGLIATGRVFSGTIREGDEVYIIGRKMKKKVLQTYIYMGPTRIIVPYMPAGNIVALMGVDEARAGDTLVDPRLTEVPPFEKMRYIAEPVVTVAIEPKNPAELAKLVEALKDLVIEDPTLDLKIDQETGQILLSGVGTLHLEIATWLLKERAKTEFTVSPPLIRFRETVRERSQVWEGKSPNKHNKLYFYVEPLDETTVELIATKEITEEQDPRERAKILREKAGWDTDEARGIWAIDDRYFNVIVDKTTGIQYLREIRDYIVQGFRWAMEAGPLAQEPMRGVKVVLVDAVVHEDPAHRGPAQIMPATKNAIFAAVLSARPTLLEPLVRLDIKVAPDYIGSVTSVLNKHRGKILDMTQQEYMAYLRAELPVLESFTISDELRAAAAGKIFWSMQFARWAPYPESMLVDFVKQLRKKKGLKEDIPKPTDFVEVF.

The tr-type G domain occupies 23-264 (AQIRNAGTLA…MIIEHVPPPN (242 aa)). Residues 32 to 39 (AHVDHGKT), 98 to 102 (DTPGH), and 152 to 155 (NKID) contribute to the GTP site. Position 605 is a diphthamide (histidine 605).

Belongs to the TRAFAC class translation factor GTPase superfamily. Classic translation factor GTPase family. EF-G/EF-2 subfamily.

It is found in the cytoplasm. Catalyzes the GTP-dependent ribosomal translocation step during translation elongation. During this step, the ribosome changes from the pre-translocational (PRE) to the post-translocational (POST) state as the newly formed A-site-bound peptidyl-tRNA and P-site-bound deacylated tRNA move to the P and E sites, respectively. Catalyzes the coordinated movement of the two tRNA molecules, the mRNA and conformational changes in the ribosome. The chain is Elongation factor 2 from Pyrobaculum arsenaticum (strain DSM 13514 / JCM 11321 / PZ6).